We begin with the raw amino-acid sequence, 275 residues long: Large ribosomal subunit protein uL2 (275 aa).

2 disordered regions span residues 36 to 55 and 223 to 275; these read KQSK…RHQG and VAMN…RHKR. Over residues 39–48 the composition is skewed to polar residues; that stretch reads KNAGRNNSGR. Residues 229 to 239 show a composition bias toward basic and acidic residues; that stretch reads DHPHGGGEGRT.

The protein belongs to the universal ribosomal protein uL2 family. In terms of assembly, part of the 50S ribosomal subunit. Forms a bridge to the 30S subunit in the 70S ribosome.

In terms of biological role, one of the primary rRNA binding proteins. Required for association of the 30S and 50S subunits to form the 70S ribosome, for tRNA binding and peptide bond formation. It has been suggested to have peptidyltransferase activity; this is somewhat controversial. Makes several contacts with the 16S rRNA in the 70S ribosome. The polypeptide is Large ribosomal subunit protein uL2 (Aromatoleum aromaticum (strain DSM 19018 / LMG 30748 / EbN1) (Azoarcus sp. (strain EbN1))).